A 356-amino-acid chain; its full sequence is MHKASSLSELGFDAGGASSGFFRPVADGCPATPTSSAVPHRRLTKISVIGAGNVGMAIAQTILTQNLADEIALVDALPDKLRGEALDLQHAAAFLPRVRISGTDAAVTKNSDLVIVTAGARQIPGETRLNLLQRNVALYRKIVPPVAEHSPDALLLVVSNPVDVLTYVAWKLSGFPASRVIGSGTNLDSSRFRFLIAEHLDVNAQDVQAYMVGEHGDSSVAIWSSISVGGMPAFKSLRDSHRSFDEAALEGIRRAVVGGAYEVIGLKGYTSWAIGYSVASLAASLLRDQRRVHPVSVLASGFHGISDGHEVFLSLPARLGRGGILGVAEMDLTEAEAAQLRRSAKTLWENCQLLDL.

Residues D75–K80 and R121 each bind NAD(+). Substrate is bound by residues R128, N160, and R191. NAD(+) is bound at residue N160. Catalysis depends on H215, which acts as the Proton acceptor. T270 is a binding site for substrate.

The protein belongs to the LDH/MDH superfamily. LDH family. As to quaternary structure, tetramer that arise from random association of LDH-A and LDH-B.

The catalysed reaction is (S)-lactate + NAD(+) = pyruvate + NADH + H(+). It participates in fermentation; pyruvate fermentation to lactate; (S)-lactate from pyruvate: step 1/1. The polypeptide is L-lactate dehydrogenase A (Hordeum vulgare (Barley)).